Here is a 412-residue protein sequence, read N- to C-terminus: Probable tRNA pseudouridine synthase D (412 aa).

D97 functions as the Nucleophile in the catalytic mechanism. Positions 167-370 (ALPNYYGYQR…YGSYRRARLQ (204 aa)) constitute a TRUD domain.

It belongs to the pseudouridine synthase TruD family.

The enzyme catalyses uridine(13) in tRNA = pseudouridine(13) in tRNA. Its function is as follows. Could be responsible for synthesis of pseudouridine from uracil-13 in transfer RNAs. This is Probable tRNA pseudouridine synthase D from Pyrobaculum neutrophilum (strain DSM 2338 / JCM 9278 / NBRC 100436 / V24Sta) (Thermoproteus neutrophilus).